Here is a 186-residue protein sequence, read N- to C-terminus: CRS2-like protein, chloroplastic (186 aa).

The N-terminal 49 residues, 1–49 (MAMTAASVFGSGGCLELLTSSKAMRGKLWTRLAPFISKRHASTSQTSLS), are a transit peptide targeting the chloroplast. Position 73 (tyrosine 73) interacts with tRNA. The active-site Proton acceptor is histidine 78. TRNA is bound by residues tyrosine 123, asparagine 125, and asparagine 171.

This sequence belongs to the PTH family.

The protein localises to the plastid. The protein resides in the chloroplast. The sequence is that of CRS2-like protein, chloroplastic from Oryza sativa subsp. japonica (Rice).